Consider the following 290-residue polypeptide: Ribosomal RNA small subunit methyltransferase A (290 aa).

Residues Asn-27, Leu-29, Gly-54, Glu-75, Asp-100, and Asn-125 each contribute to the S-adenosyl-L-methionine site.

Belongs to the class I-like SAM-binding methyltransferase superfamily. rRNA adenine N(6)-methyltransferase family. RsmA subfamily.

It is found in the cytoplasm. It catalyses the reaction adenosine(1518)/adenosine(1519) in 16S rRNA + 4 S-adenosyl-L-methionine = N(6)-dimethyladenosine(1518)/N(6)-dimethyladenosine(1519) in 16S rRNA + 4 S-adenosyl-L-homocysteine + 4 H(+). In terms of biological role, specifically dimethylates two adjacent adenosines (A1518 and A1519) in the loop of a conserved hairpin near the 3'-end of 16S rRNA in the 30S particle. May play a critical role in biogenesis of 30S subunits. The sequence is that of Ribosomal RNA small subunit methyltransferase A from Streptococcus pneumoniae (strain CGSP14).